The chain runs to 258 residues: Acyl-[acyl-carrier-protein]--UDP-N-acetylglucosamine O-acyltransferase (258 aa).

It belongs to the transferase hexapeptide repeat family. LpxA subfamily. In terms of assembly, homotrimer.

It localises to the cytoplasm. The enzyme catalyses a (3R)-hydroxyacyl-[ACP] + UDP-N-acetyl-alpha-D-glucosamine = a UDP-3-O-[(3R)-3-hydroxyacyl]-N-acetyl-alpha-D-glucosamine + holo-[ACP]. Its pathway is glycolipid biosynthesis; lipid IV(A) biosynthesis; lipid IV(A) from (3R)-3-hydroxytetradecanoyl-[acyl-carrier-protein] and UDP-N-acetyl-alpha-D-glucosamine: step 1/6. Functionally, involved in the biosynthesis of lipid A, a phosphorylated glycolipid that anchors the lipopolysaccharide to the outer membrane of the cell. The polypeptide is Acyl-[acyl-carrier-protein]--UDP-N-acetylglucosamine O-acyltransferase (Pseudomonas putida (strain GB-1)).